The primary structure comprises 312 residues: RNA binding protein fox-1 homolog 3 (312 aa).

A compositionally biased stretch (pro residues) spans 1-29 (MAQPYPPAQYPPPPQNGIPAEYAPPPPHP). The segment at 1 to 104 (MAQPYPPAQY…KQQPKRLHVS (104 aa)) is disordered. A compositionally biased stretch (polar residues) spans 49–87 (TPAQTHPEQPGSEASTQPIAGTQTVPQTDEAAQTDSQPL). The region spanning 100 to 175 (RLHVSNIPFR…RKIEVNNATA (76 aa)) is the RRM domain. Asymmetric dimethylarginine; alternate is present on R223. Residue R223 is modified to Omega-N-methylarginine; alternate. R272 carries the post-translational modification Asymmetric dimethylarginine.

The protein localises to the nucleus. It is found in the cytoplasm. In terms of biological role, pre-mRNA alternative splicing regulator. Regulates alternative splicing of RBFOX2 to enhance the production of mRNA species that are targeted for nonsense-mediated decay (NMD). The polypeptide is RNA binding protein fox-1 homolog 3 (RBFOX3) (Homo sapiens (Human)).